We begin with the raw amino-acid sequence, 210 residues long: Mating-type-like protein A1 (210 aa).

Residues 141 to 200 (SKKKRQRLDNSTKEFLEKVFEKNKQPNRRERELIAEKHGVSLSQIRVWFTNKRMRKKEPK) constitute a DNA-binding region (homeobox).

Belongs to the MATA1 family. In terms of assembly, forms a heterodimer with ALPHA2.

The protein resides in the nucleus. In terms of biological role, mating type proteins are sequence specific DNA-binding proteins that act as master switches in yeast differentiation by controlling gene expression in a cell type-specific fashion. Transcriptional corepressor that acts in conjunction with ALPHA2 to repress transcription both of homozygote-specific genes and of genes necessary for the white-opaque switch, a prerequisite for mating. This is Mating-type-like protein A1 (MTLA1) from Candida albicans (strain SC5314 / ATCC MYA-2876) (Yeast).